The sequence spans 225 residues: Ribose-5-phosphate isomerase A (225 aa).

Residues 26–29 (TGST), 82–85 (DGAD), and 95–98 (KGGG) each bind substrate. Glu-104 serves as the catalytic Proton acceptor. Lys-122 is a substrate binding site.

Belongs to the ribose 5-phosphate isomerase family. In terms of assembly, homodimer.

The enzyme catalyses aldehydo-D-ribose 5-phosphate = D-ribulose 5-phosphate. The protein operates within carbohydrate degradation; pentose phosphate pathway; D-ribose 5-phosphate from D-ribulose 5-phosphate (non-oxidative stage): step 1/1. In terms of biological role, catalyzes the reversible conversion of ribose-5-phosphate to ribulose 5-phosphate. The polypeptide is Ribose-5-phosphate isomerase A (Streptococcus gordonii (strain Challis / ATCC 35105 / BCRC 15272 / CH1 / DL1 / V288)).